We begin with the raw amino-acid sequence, 163 residues long: S-ribosylhomocysteine lyase (163 aa).

Fe cation is bound by residues His54, His58, and Cys128.

The protein belongs to the LuxS family. In terms of assembly, homodimer. Requires Fe cation as cofactor.

It carries out the reaction S-(5-deoxy-D-ribos-5-yl)-L-homocysteine = (S)-4,5-dihydroxypentane-2,3-dione + L-homocysteine. Its function is as follows. Involved in the synthesis of autoinducer 2 (AI-2) which is secreted by bacteria and is used to communicate both the cell density and the metabolic potential of the environment. The regulation of gene expression in response to changes in cell density is called quorum sensing. Catalyzes the transformation of S-ribosylhomocysteine (RHC) to homocysteine (HC) and 4,5-dihydroxy-2,3-pentadione (DPD). This chain is S-ribosylhomocysteine lyase, found in Wolinella succinogenes (strain ATCC 29543 / DSM 1740 / CCUG 13145 / JCM 31913 / LMG 7466 / NCTC 11488 / FDC 602W) (Vibrio succinogenes).